The sequence spans 249 residues: MHSSLHALPVLQDNVIWIWVRGAEAVVIDPAVAPPVRAWLEKRQLSLAAVLQTHHHADHIGGTPELLQRWPEAEVIASADDRERIPFQTMPVRGGDHVTVLGETVEVMDVAAHTRAHIAFFLPNPKGAEIRPLLFCGDTLFSGGCGRLFEGSAEQMHQALQKLAELPEATQVCCAHEYTEANLQWAVAQQPNNTVLVERYREVRSLRAKGELSLPSSIGLERRTNLFMQASSAAELGFLRSHKDQWRPT.

Residues H54, H56, D58, H59, H113, D138, and H176 each coordinate Zn(2+).

This sequence belongs to the metallo-beta-lactamase superfamily. Glyoxalase II family. As to quaternary structure, monomer. The cofactor is Zn(2+).

The enzyme catalyses an S-(2-hydroxyacyl)glutathione + H2O = a 2-hydroxy carboxylate + glutathione + H(+). It functions in the pathway secondary metabolite metabolism; methylglyoxal degradation; (R)-lactate from methylglyoxal: step 2/2. Thiolesterase that catalyzes the hydrolysis of S-D-lactoyl-glutathione to form glutathione and D-lactic acid. This is Hydroxyacylglutathione hydrolase from Synechococcus sp. (strain CC9605).